We begin with the raw amino-acid sequence, 244 residues long: Phosphoadenosine 5'-phosphosulfate reductase (244 aa).

Cysteine 239 acts as the Nucleophile; cysteine thiosulfonate intermediate in catalysis.

The protein belongs to the PAPS reductase family. CysH subfamily.

The protein localises to the cytoplasm. The catalysed reaction is [thioredoxin]-disulfide + sulfite + adenosine 3',5'-bisphosphate + 2 H(+) = [thioredoxin]-dithiol + 3'-phosphoadenylyl sulfate. The protein operates within sulfur metabolism; hydrogen sulfide biosynthesis; sulfite from sulfate: step 3/3. Catalyzes the formation of sulfite from phosphoadenosine 5'-phosphosulfate (PAPS) using thioredoxin as an electron donor. This is Phosphoadenosine 5'-phosphosulfate reductase from Yersinia pseudotuberculosis serotype O:1b (strain IP 31758).